The chain runs to 264 residues: NADH dehydrogenase [ubiquinone] iron-sulfur protein 3, mitochondrial (264 aa).

A mitochondrion-targeting transit peptide spans 1–36; that stretch reads MAAAAVARLWWRGILGASALTRGTGRPSVLLLPVRR.

Belongs to the complex I 30 kDa subunit family. As to quaternary structure, core subunit of respiratory chain NADH dehydrogenase (Complex I) which is composed of 45 different subunits. Interacts with NDUFAF3. Interacts with RAB5IF. Found in subcomplexes containing subunits NDUFS2, MT-ND1 and NDUFA13.

The protein resides in the mitochondrion inner membrane. The catalysed reaction is a ubiquinone + NADH + 5 H(+)(in) = a ubiquinol + NAD(+) + 4 H(+)(out). In terms of biological role, core subunit of the mitochondrial membrane respiratory chain NADH dehydrogenase (Complex I) which catalyzes electron transfer from NADH through the respiratory chain, using ubiquinone as an electron acceptor. Essential for the catalytic activity and assembly of complex I. The chain is NADH dehydrogenase [ubiquinone] iron-sulfur protein 3, mitochondrial (NDUFS3) from Homo sapiens (Human).